The chain runs to 2152 residues: Oxygen-regulated protein 1 (2152 aa).

Residues 1–19 (MSDTPSTGFSIIHPTSSED) show a composition bias toward polar residues. Residues 1–25 (MSDTPSTGFSIIHPTSSEDQVPPPR) form a disordered region. 2 consecutive Doublecortin domains span residues 36 to 118 (KRIS…VDLD) and 154 to 233 (RSLV…GNYD). Disordered stretches follow at residues 353–375 (VSKTGPSNNDEKSEMSFPGRTES), 1435–1455 (DMEEPRTSEEPGSITNSMTSS), and 1587–1616 (DWSDYRPDSDSEQPYKTSSDDPNDSGELAQ).

Interacts (via the doublecortin domains) with microtubules. Interacts with RP1L1. Interacts with MAK.

Its subcellular location is the cytoplasm. It localises to the cytoskeleton. The protein localises to the cilium axoneme. It is found in the cell projection. The protein resides in the cilium. Its subcellular location is the photoreceptor outer segment. Functionally, microtubule-associated protein regulating the stability and length of the microtubule-based axoneme of photoreceptors. Required for the differentiation of photoreceptor cells, it plays a role in the organization of the outer segment of rod and cone photoreceptors ensuring the correct orientation and higher-order stacking of outer segment disks along the photoreceptor axoneme. The protein is Oxygen-regulated protein 1 (RP1) of Papio hamadryas (Hamadryas baboon).